Reading from the N-terminus, the 39-residue chain is Colipase (39 aa).

2 cysteine pairs are disulfide-bonded: Cys16–Cys27 and Cys22–Cys38.

Belongs to the colipase family. Forms a 1:1 stoichiometric complex with pancreatic lipase. As to expression, expressed by the pancreas.

Its subcellular location is the secreted. Functionally, colipase is a cofactor of pancreatic lipase. It allows the lipase to anchor itself to the lipid-water interface. Without colipase the enzyme is washed off by bile salts, which have an inhibitory effect on the lipase. The sequence is that of Colipase from Squalus acanthias (Spiny dogfish).